Consider the following 415-residue polypeptide: SNF1 protein kinase subunit beta-2 (415 aa).

Disordered regions lie at residues 1-43 (MGTT…EMDA), 55-158 (KCSD…PSEI), and 249-276 (EKNPTNEKIRSKEADSMRPPTSDRSSIA). Gly2 is lipidated: N-myristoyl glycine. A compositionally biased stretch (basic residues) spans 9–19 (AQKKQTTKKCR). A compositionally biased stretch (polar residues) spans 55–69 (KCSDSQDAGQPSREG). The residue at position 66 (Ser66) is a Phosphoserine. Basic and acidic residues-rich tracts occupy residues 122–150 (PKQDASPDDDRSGHSSPREEGQQQIRAKE) and 249–264 (EKNPTNEKIRSKEADS). A kinase-interacting sequence (KIS); required for interaction with SNF1 region spans residues 154–335 (GPSEIKSSLM…LDRQQSNTDT (182 aa)). Ser298 carries the phosphoserine modification. Positions 336 to 415 (SWLTPPQLPP…QILYTPIESS (80 aa)) are association with SNF1 kinase complex (ASC) domain; required for interaction with SNF4.

The protein belongs to the 5'-AMP-activated protein kinase beta subunit family. In terms of assembly, component of the SNF1 kinase complex, a heterotrimeric complex composed of the catalytic alpha subunit SNF1, one of the three related beta subunits SIP1, SIP2 or GAL83, and the regulatory gamma subunit SNF4. The beta subunit serves as a bridge between the catalytic and the regulatory subunit. Interacts (via KIS domain) with SNF1. Interacts (via ASC domain) with SNF4. Post-translationally, phosphorylated by SNF1 in vitro.

It localises to the cytoplasm. The protein localises to the cell membrane. Functionally, beta subunit of the SNF1 kinase complex, which is required for transcriptional, metabolic, and developmental adaptations in response to glucose limitation. Has a structural role, mediating heterotrimer formation, and a regulatory role, defining carbon source-regulated subcellular location and substrate specificity of the SNF1 kinase complex. Involved in the regulation of aging. Acts as a negative regulator of nuclear SNF1 activity in young cells by sequestering its activating gamma subunit at the plasma membrane. The sequence is that of SNF1 protein kinase subunit beta-2 (SIP2) from Saccharomyces cerevisiae (strain ATCC 204508 / S288c) (Baker's yeast).